We begin with the raw amino-acid sequence, 401 residues long: Beta-ketoadipyl-CoA thiolase (401 aa).

Catalysis depends on C90, which acts as the Acyl-thioester intermediate. Active-site proton acceptor residues include H357 and C387.

It belongs to the thiolase-like superfamily. Thiolase family.

The enzyme catalyses succinyl-CoA + acetyl-CoA = 3-oxoadipyl-CoA + CoA. It participates in aromatic compound metabolism; beta-ketoadipate pathway; acetyl-CoA and succinyl-CoA from 3-oxoadipate: step 2/2. Its function is as follows. Catalyzes thiolytic cleavage of beta-ketoadipyl-CoA to succinyl-CoA and acetyl-CoA. The chain is Beta-ketoadipyl-CoA thiolase (pcaF) from Acinetobacter baylyi (strain ATCC 33305 / BD413 / ADP1).